A 2036-amino-acid chain; its full sequence is Putative mediator of RNA polymerase II transcription subunit 24 (2036 aa).

Disordered regions lie at residues 51-70 (NNNN…NNNV), 159-184 (DNIE…NNIG), 212-451 (SPSP…QTTT), 501-580 (KSVN…NNNN), 754-840 (NLKN…SHQK), 928-1124 (NNNN…NKDL), 1375-1419 (NNKN…NNNN), and 1565-1608 (NSSA…NGDT). Low complexity predominate over residues 212 to 229 (SPSPSSSSSSSTSPSSQQ). The segment covering 260–270 (EIMKVKEEPIK) has biased composition (basic and acidic residues). Low complexity-rich tracts occupy residues 273–291 (TTTT…STTT), 300–311 (TNGNGEETTITT), 387–451 (QPQP…QTTT), 501–539 (KSVN…NSNN), 547–580 (NNNN…NNNN), and 754–770 (NLKN…NSNG). Residues 505–584 (NNNNNNNNNN…NNNNNNINNI (80 aa)) adopt a coiled-coil conformation. The span at 778 to 787 (GSSTDGSNKL) shows a compositional bias: polar residues. Low complexity-rich tracts occupy residues 788-808 (SSTN…LNGN) and 928-943 (NNNN…NNKN). Residues 943–977 (NKNSKKSNNKNKNNKNNNKKNKNNNNNNNNNNNNN) are a coiled coil. The segment covering 944 to 964 (KNSKKSNNKNKNNKNNNKKNK) has biased composition (basic residues). Low complexity-rich tracts occupy residues 965 to 999 (NNNN…NNNN), 1017 to 1118 (NNNN…NNNN), 1385 to 1419 (SNNS…NNNN), 1565 to 1584 (NSSA…LPKS), and 1594 to 1608 (SSNT…NGDT). A coiled-coil region spans residues 1915-1968 (SKNQSLKKKQKLKQKKQQHNNNNGGEYNIDQDHIEQIQQQQQQYQKQQQQRKDE).

It belongs to the Mediator complex subunit 24 family. As to quaternary structure, component of the Mediator complex.

The protein localises to the nucleus. In terms of biological role, component of the Mediator complex, a coactivator involved in the regulated transcription of nearly all RNA polymerase II-dependent genes. Mediator functions as a bridge to convey information from gene-specific regulatory proteins to the basal RNA polymerase II transcription machinery. Mediator is recruited to promoters by direct interactions with regulatory proteins and serves as a scaffold for the assembly of a functional preinitiation complex with RNA polymerase II and the general transcription factors. The sequence is that of Putative mediator of RNA polymerase II transcription subunit 24 (med24) from Dictyostelium discoideum (Social amoeba).